A 456-amino-acid chain; its full sequence is ATP synthase subunit beta 1 (456 aa).

152–159 is an ATP binding site; sequence GGAGVGKS.

Belongs to the ATPase alpha/beta chains family. F-type ATPases have 2 components, CF(1) - the catalytic core - and CF(0) - the membrane proton channel. CF(1) has five subunits: alpha(3), beta(3), gamma(1), delta(1), epsilon(1). CF(0) has three main subunits: a(1), b(2) and c(9-12). The alpha and beta chains form an alternating ring which encloses part of the gamma chain. CF(1) is attached to CF(0) by a central stalk formed by the gamma and epsilon chains, while a peripheral stalk is formed by the delta and b chains.

It localises to the cell membrane. It catalyses the reaction ATP + H2O + 4 H(+)(in) = ADP + phosphate + 5 H(+)(out). In terms of biological role, produces ATP from ADP in the presence of a proton gradient across the membrane. The catalytic sites are hosted primarily by the beta subunits. This Listeria welshimeri serovar 6b (strain ATCC 35897 / DSM 20650 / CCUG 15529 / CIP 8149 / NCTC 11857 / SLCC 5334 / V8) protein is ATP synthase subunit beta 1.